Here is a 565-residue protein sequence, read N- to C-terminus: Inositol-3-phosphate synthase (565 aa).

NAD(+) is bound by residues glycine 70, glycine 71, asparagine 72, asparagine 73, aspartate 144, serine 180, isoleucine 181, glutamine 191, arginine 194, threonine 231, alanine 232, asparagine 233, threonine 234, glycine 282, serine 283, aspartate 307, serine 310, asparagine 341, asparagine 342, aspartate 343, lysine 356, glycine 394, aspartate 395, aspartate 423, and serine 424. Position 536 is a phosphoserine (serine 536). Positions 546-565 are disordered; that stretch reads LHANGHSNGSAKLATNGNGH. The segment covering 550 to 565 has biased composition (polar residues); sequence GHSNGSAKLATNGNGH.

Belongs to the myo-inositol 1-phosphate synthase family. Requires NAD(+) as cofactor. Higher expression in adult heads than bodies.

It localises to the cytoplasm. The enzyme catalyses D-glucose 6-phosphate = 1D-myo-inositol 3-phosphate. It participates in polyol metabolism; myo-inositol biosynthesis; myo-inositol from D-glucose 6-phosphate: step 1/2. Key enzyme in myo-inositol biosynthesis pathway that catalyzes the conversion of glucose 6-phosphate to 1-myo-inositol 1-phosphate in a NAD-dependent manner. Rate-limiting enzyme in the synthesis of all inositol-containing compounds. The sequence is that of Inositol-3-phosphate synthase (Inos) from Drosophila melanogaster (Fruit fly).